Reading from the N-terminus, the 164-residue chain is Superoxide dismutase [Cu-Zn] 3 (164 aa).

Cu cation contacts are provided by H51, H53, and H68. A disulfide bond links C62 and C151. The Zn(2+) site is built by H68, H76, H85, and D88. H125 provides a ligand contact to Cu cation. Positions 162-164 (AKL) match the Peroxisome localization signal motif.

This sequence belongs to the Cu-Zn superoxide dismutase family. In terms of assembly, homodimer. Cu cation serves as cofactor. Requires Zn(2+) as cofactor. In terms of tissue distribution, expressed in leaves (at protein level).

The protein localises to the peroxisome. It carries out the reaction 2 superoxide + 2 H(+) = H2O2 + O2. In terms of biological role, destroys radicals which are normally produced within the cells and which are toxic to biological systems. The sequence is that of Superoxide dismutase [Cu-Zn] 3 (CSD3) from Arabidopsis thaliana (Mouse-ear cress).